Here is a 1146-residue protein sequence, read N- to C-terminus: Ankyrin repeat domain-containing protein 24 (1146 aa).

ANK repeat units follow at residues 81-110 (EGKSAFHLAAMRGAASCLEVMIAHGSNVMS), 114-143 (AGYNALHLAAKYGHPQCLKQLLQASCVVDV), 147-176 (SGWTALHHAAAGGCLSCSEVLCSFKAHLNP), 180-209 (SGATPLIIAAQMCHTDLCRLLLQQGAAAND), and 213-242 (QGRTALMLACEGASPETVEVLLQGGAQPGI). Disordered regions lie at residues 272–320 (RPSP…PDDR), 607–627 (REMETTEEEANMETKPTGAQA), and 766–785 (ERVREAEGSGASGGGGGDTT). The segment covering 286 to 297 (EASSQNSMSSHG) has biased composition (polar residues). The stretch at 320–517 (RDAYEEIVRL…QALRQQETRE (198 aa)) forms a coiled coil. Residues 714–1110 (AAEASEKLQV…AARDHSSVVA (397 aa)) adopt a coiled-coil conformation.

As to quaternary structure, homodimer. Interacts (via C-terminal domain) with TRIOBP (via C-terminal domain) isoform 4; recruits TRIOBP isoform 4 to stereocilia rootlets.

Its subcellular location is the cell membrane. It is found in the cell projection. The protein resides in the stereocilium. In terms of biological role, component of the stereocilia rootlet in hair cells of inner ear. Bridges the apical plasma membrane with the lower rootlet and maintains normal distribution of TRIOBP, thereby reinforcing stereocilia insertion points and organizing rootlets for hearing with long-term resilience. In Homo sapiens (Human), this protein is Ankyrin repeat domain-containing protein 24.